The following is a 348-amino-acid chain: UDP-3-O-acylglucosamine N-acyltransferase (348 aa).

His-257 (proton acceptor) is an active-site residue.

This sequence belongs to the transferase hexapeptide repeat family. LpxD subfamily. In terms of assembly, homotrimer.

The enzyme catalyses a UDP-3-O-[(3R)-3-hydroxyacyl]-alpha-D-glucosamine + a (3R)-hydroxyacyl-[ACP] = a UDP-2-N,3-O-bis[(3R)-3-hydroxyacyl]-alpha-D-glucosamine + holo-[ACP] + H(+). It participates in bacterial outer membrane biogenesis; LPS lipid A biosynthesis. In terms of biological role, catalyzes the N-acylation of UDP-3-O-acylglucosamine using 3-hydroxyacyl-ACP as the acyl donor. Is involved in the biosynthesis of lipid A, a phosphorylated glycolipid that anchors the lipopolysaccharide to the outer membrane of the cell. In Bartonella henselae (strain ATCC 49882 / DSM 28221 / CCUG 30454 / Houston 1) (Rochalimaea henselae), this protein is UDP-3-O-acylglucosamine N-acyltransferase.